Here is an 873-residue protein sequence, read N- to C-terminus: DNA helicase/primase complex-associated protein (873 aa).

The disordered stretch occupies residues 394–422; the sequence is PPLPRDDGDGENNVVEVSSSTGGAHPPSD.

Belongs to the herpesviridae HEPA family. In terms of assembly, associates with the primase and the helicase to form the helicase-primase complex. Interacts with the origin-binding protein. Interacts with the polymerase catalytic subunit.

It localises to the host nucleus. Its function is as follows. Component of the helicase/primase complex. Unwinds the DNA at the replication forks and generates single-stranded DNA for both leading and lagging strand synthesis. The primase synthesizes short RNA primers on the lagging strand that the polymerase presumably elongates using dNTPs. The primase-associated factor has no known catalytic activity in the complex and may serve to facilitate the formation of the replisome by directly interacting with the origin-binding protein and the polymerase. The protein is DNA helicase/primase complex-associated protein (UL102) of Homo sapiens (Human).